The sequence spans 226 residues: Enolase-phosphatase E1 (226 aa).

This sequence belongs to the HAD-like hydrolase superfamily. MasA/MtnC family. In terms of assembly, monomer. Requires Mg(2+) as cofactor.

It catalyses the reaction 5-methylsulfanyl-2,3-dioxopentyl phosphate + H2O = 1,2-dihydroxy-5-(methylsulfanyl)pent-1-en-3-one + phosphate. It participates in amino-acid biosynthesis; L-methionine biosynthesis via salvage pathway; L-methionine from S-methyl-5-thio-alpha-D-ribose 1-phosphate: step 3/6. Its pathway is amino-acid biosynthesis; L-methionine biosynthesis via salvage pathway; L-methionine from S-methyl-5-thio-alpha-D-ribose 1-phosphate: step 4/6. Bifunctional enzyme that catalyzes the enolization of 2,3-diketo-5-methylthiopentyl-1-phosphate (DK-MTP-1-P) into the intermediate 2-hydroxy-3-keto-5-methylthiopentenyl-1-phosphate (HK-MTPenyl-1-P), which is then dephosphorylated to form the acireductone 1,2-dihydroxy-3-keto-5-methylthiopentene (DHK-MTPene). This is Enolase-phosphatase E1 from Shewanella frigidimarina (strain NCIMB 400).